We begin with the raw amino-acid sequence, 249 residues long: 2,3-bisphosphoglycerate-dependent phosphoglycerate mutase (249 aa).

Substrate-binding positions include 9–16, 22–23, Arg61, 88–91, Lys99, 115–116, and 184–185; these read RHGQSQWN, TG, ERHY, RR, and GN. The active-site Tele-phosphohistidine intermediate is the His10. Glu88 functions as the Proton donor/acceptor in the catalytic mechanism.

This sequence belongs to the phosphoglycerate mutase family. BPG-dependent PGAM subfamily. Homodimer.

It catalyses the reaction (2R)-2-phosphoglycerate = (2R)-3-phosphoglycerate. It functions in the pathway carbohydrate degradation; glycolysis; pyruvate from D-glyceraldehyde 3-phosphate: step 3/5. Its function is as follows. Catalyzes the interconversion of 2-phosphoglycerate and 3-phosphoglycerate. In Stenotrophomonas maltophilia (strain K279a), this protein is 2,3-bisphosphoglycerate-dependent phosphoglycerate mutase.